The primary structure comprises 97 residues: Large ribosomal subunit protein uL23 (97 aa).

Belongs to the universal ribosomal protein uL23 family. In terms of assembly, part of the 50S ribosomal subunit. Contacts protein L29, and trigger factor when it is bound to the ribosome.

Functionally, one of the early assembly proteins it binds 23S rRNA. One of the proteins that surrounds the polypeptide exit tunnel on the outside of the ribosome. Forms the main docking site for trigger factor binding to the ribosome. The polypeptide is Large ribosomal subunit protein uL23 (Allorhizobium ampelinum (strain ATCC BAA-846 / DSM 112012 / S4) (Agrobacterium vitis (strain S4))).